The sequence spans 884 residues: Lon protease homolog 2, peroxisomal (884 aa).

One can recognise a Lon N-terminal domain in the interval 12 to 255; sequence LAILPFRNKV…KATELVDRHL (244 aa). The disordered stretch occupies residues 67 to 101; it reads SLLSPGVGSDSGEGGSKAPGGSAGESTKQDTKNGK. Over residues 75–89 the composition is skewed to gly residues; sequence SDSGEGGSKAPGGSA. 408–415 provides a ligand contact to ATP; it reads GPPGVGKT. The Lon proteolytic domain occupies 689-874; sequence VASPGVSVGL…EEVLDHAFEG (186 aa). Catalysis depends on residues serine 780 and lysine 823. The short motif at 882–884 is the Microbody targeting signal element; it reads SKL.

This sequence belongs to the peptidase S16 family.

The protein resides in the peroxisome matrix. The enzyme catalyses Hydrolysis of proteins in presence of ATP.. Functionally, ATP-dependent serine protease that mediates the selective degradation of misfolded and unassembled polypeptides in the peroxisomal matrix. Necessary for type 2 peroxisome targeting signal (PTS2)-containing protein processing and facilitates peroxisome matrix protein import. The polypeptide is Lon protease homolog 2, peroxisomal (Oryza sativa subsp. japonica (Rice)).